Here is a 155-residue protein sequence, read N- to C-terminus: Endoribonuclease YbeY (155 aa).

Zn(2+) contacts are provided by His120, His124, and His130.

This sequence belongs to the endoribonuclease YbeY family. Zn(2+) serves as cofactor.

It is found in the cytoplasm. In terms of biological role, single strand-specific metallo-endoribonuclease involved in late-stage 70S ribosome quality control and in maturation of the 3' terminus of the 16S rRNA. This Staphylococcus epidermidis (strain ATCC 12228 / FDA PCI 1200) protein is Endoribonuclease YbeY.